We begin with the raw amino-acid sequence, 967 residues long: Leucine--tRNA ligase (967 aa).

Positions 43-53 (PYLSGHLHVGH) match the 'HIGH' region motif. A 'KMSKS' region motif is present at residues 650–654 (KMSKS). ATP is bound at residue K653.

It belongs to the class-I aminoacyl-tRNA synthetase family.

The protein resides in the cytoplasm. It catalyses the reaction tRNA(Leu) + L-leucine + ATP = L-leucyl-tRNA(Leu) + AMP + diphosphate. The chain is Leucine--tRNA ligase from Pyrococcus horikoshii (strain ATCC 700860 / DSM 12428 / JCM 9974 / NBRC 100139 / OT-3).